Reading from the N-terminus, the 115-residue chain is Non-specific lipid-transfer protein (115 aa).

The first 24 residues, 1-24, serve as a signal peptide directing secretion; the sequence is MASSAVIKLALVVALCMAVSVAHA. 4 cysteine pairs are disulfide-bonded: Cys27–Cys74, Cys37–Cys51, Cys52–Cys97, and Cys72–Cys111.

It belongs to the plant LTP family.

Functionally, plant non-specific lipid-transfer proteins transfer phospholipids as well as galactolipids across membranes. May play a role in wax or cutin deposition in the cell walls of expanding epidermal cells and certain secretory tissues. This Pyrus communis (Pear) protein is Non-specific lipid-transfer protein.